The sequence spans 94 residues: Pyrimidine/purine nucleoside phosphorylase (94 aa).

Belongs to the nucleoside phosphorylase PpnP family.

The enzyme catalyses a purine D-ribonucleoside + phosphate = a purine nucleobase + alpha-D-ribose 1-phosphate. It carries out the reaction adenosine + phosphate = alpha-D-ribose 1-phosphate + adenine. The catalysed reaction is cytidine + phosphate = cytosine + alpha-D-ribose 1-phosphate. It catalyses the reaction guanosine + phosphate = alpha-D-ribose 1-phosphate + guanine. The enzyme catalyses inosine + phosphate = alpha-D-ribose 1-phosphate + hypoxanthine. It carries out the reaction thymidine + phosphate = 2-deoxy-alpha-D-ribose 1-phosphate + thymine. The catalysed reaction is uridine + phosphate = alpha-D-ribose 1-phosphate + uracil. It catalyses the reaction xanthosine + phosphate = alpha-D-ribose 1-phosphate + xanthine. Functionally, catalyzes the phosphorolysis of diverse nucleosides, yielding D-ribose 1-phosphate and the respective free bases. Can use uridine, adenosine, guanosine, cytidine, thymidine, inosine and xanthosine as substrates. Also catalyzes the reverse reactions. The polypeptide is Pyrimidine/purine nucleoside phosphorylase (Aeromonas salmonicida (strain A449)).